Consider the following 450-residue polypeptide: Phosphoglucosamine mutase 2 (450 aa).

The active-site Phosphoserine intermediate is Ser101. The Mg(2+) site is built by Ser101, Asp245, Asp247, and Asp249. A Phosphoserine modification is found at Ser101.

The protein belongs to the phosphohexose mutase family. It depends on Mg(2+) as a cofactor. Activated by phosphorylation.

The catalysed reaction is alpha-D-glucosamine 1-phosphate = D-glucosamine 6-phosphate. In terms of biological role, catalyzes the conversion of glucosamine-6-phosphate to glucosamine-1-phosphate. This is Phosphoglucosamine mutase 2 from Shewanella frigidimarina (strain NCIMB 400).